The chain runs to 472 residues: Violaxanthin de-epoxidase, chloroplastic (472 aa).

6 disulfide bridges follow: C133–C151, C138–C145, C157–C174, C161–C170, C189–C196, and C242–C372. The stretch at 379–462 forms a coiled coil; sequence VERLEKTVEE…MEAGEVEKLF (84 aa).

This sequence belongs to the calycin superfamily. Lipocalin family. In terms of processing, disulfide bonds. Reduction of the disulfides results in loss of a rigid structure, a decrease in thermal stability of 15 degrees Celsius and a loss of activity.

The protein localises to the plastid. It is found in the chloroplast thylakoid membrane. The enzyme catalyses all-trans-violaxanthin + 2 L-ascorbate = all-trans-zeaxanthin + 2 L-dehydroascorbate + 2 H2O. With respect to regulation, irreversibly inhibited by DTT and iodoacetamide at pH 5.7 or pH 5.2, but not at pH 7.2. Regulated through Ca(2+) gating of H(+) flux at the CFoH(+) channel. Requires the presence of lipids forming reverse hexagonal structures such as monogalactosyldiacylglyceride (MGDG) or phosphatidylethanolamine. A negative curvature elastic stress in the thylakoid lipid bilayer is required for VDE1 activity. Functionally, part of the xanthophyll (or violaxanthin) cycle for controlling the concentration of zeaxanthin in chloroplasts. Catalyzes the two-step mono de-epoxidation reaction. Stereospecific for all-trans xanthophylls. Zeaxanthin induces the dissipation of excitation energy in the chlorophyll of the light-harvesting protein complex of photosystem II. The chain is Violaxanthin de-epoxidase, chloroplastic from Spinacia oleracea (Spinach).